A 726-amino-acid polypeptide reads, in one-letter code: Probable alpha-galactosidase G (726 aa).

N-linked (GlcNAc...) asparagine glycosylation is found at Asn23, Asn166, and Asn456. Residue Asp485 is the Nucleophile of the active site. Asp547 functions as the Proton donor in the catalytic mechanism. 2 N-linked (GlcNAc...) asparagine glycosylation sites follow: Asn657 and Asn673.

This sequence belongs to the glycosyl hydrolase 36 family. Homotetramer. Mg(2+) serves as cofactor. NAD(+) is required as a cofactor.

It is found in the secreted. It catalyses the reaction Hydrolysis of terminal, non-reducing alpha-D-galactose residues in alpha-D-galactosides, including galactose oligosaccharides, galactomannans and galactolipids.. Hydrolyzes a variety of simple alpha-D-galactoside as well as more complex molecules such as oligosaccharides and polysaccharides. Not active on paranitrophenyl-alpha-galactoside and raffinose. This Emericella nidulans (strain FGSC A4 / ATCC 38163 / CBS 112.46 / NRRL 194 / M139) (Aspergillus nidulans) protein is Probable alpha-galactosidase G (aglG).